Reading from the N-terminus, the 882-residue chain is Pyruvate dehydrogenase E1 component (882 aa).

Homodimer. Part of the PDH complex, consisting of multiple copies of pyruvate dehydrogenase (E1), dihydrolipoamide acetyltransferase (E2) and lipoamide dehydrogenase (E3). The cofactor is thiamine diphosphate.

The catalysed reaction is N(6)-[(R)-lipoyl]-L-lysyl-[protein] + pyruvate + H(+) = N(6)-[(R)-S(8)-acetyldihydrolipoyl]-L-lysyl-[protein] + CO2. Component of the pyruvate dehydrogenase (PDH) complex, that catalyzes the overall conversion of pyruvate to acetyl-CoA and CO(2). The protein is Pyruvate dehydrogenase E1 component (aceE) of Pseudomonas aeruginosa (strain ATCC 15692 / DSM 22644 / CIP 104116 / JCM 14847 / LMG 12228 / 1C / PRS 101 / PAO1).